Consider the following 426-residue polypeptide: Glutamate-1-semialdehyde 2,1-aminomutase (426 aa).

Residue Lys265 is modified to N6-(pyridoxal phosphate)lysine.

Belongs to the class-III pyridoxal-phosphate-dependent aminotransferase family. HemL subfamily. Requires pyridoxal 5'-phosphate as cofactor.

It is found in the cytoplasm. The catalysed reaction is (S)-4-amino-5-oxopentanoate = 5-aminolevulinate. It functions in the pathway porphyrin-containing compound metabolism; protoporphyrin-IX biosynthesis; 5-aminolevulinate from L-glutamyl-tRNA(Glu): step 2/2. The chain is Glutamate-1-semialdehyde 2,1-aminomutase from Hyperthermus butylicus (strain DSM 5456 / JCM 9403 / PLM1-5).